A 428-amino-acid chain; its full sequence is Tol-Pal system protein TolB (428 aa).

Residues 1–24 (MPSLKTLLRGVLVAAMLVAGSARA) form the signal peptide.

This sequence belongs to the TolB family. As to quaternary structure, the Tol-Pal system is composed of five core proteins: the inner membrane proteins TolA, TolQ and TolR, the periplasmic protein TolB and the outer membrane protein Pal. They form a network linking the inner and outer membranes and the peptidoglycan layer.

Its subcellular location is the periplasm. Its function is as follows. Part of the Tol-Pal system, which plays a role in outer membrane invagination during cell division and is important for maintaining outer membrane integrity. This Chromobacterium violaceum (strain ATCC 12472 / DSM 30191 / JCM 1249 / CCUG 213 / NBRC 12614 / NCIMB 9131 / NCTC 9757 / MK) protein is Tol-Pal system protein TolB.